Reading from the N-terminus, the 198-residue chain is Recombination protein RecR (198 aa).

The C4-type zinc finger occupies cysteine 57–cysteine 72. Residues arginine 80–proline 175 enclose the Toprim domain.

It belongs to the RecR family.

May play a role in DNA repair. It seems to be involved in an RecBC-independent recombinational process of DNA repair. It may act with RecF and RecO. The sequence is that of Recombination protein RecR from Anaeromyxobacter dehalogenans (strain 2CP-C).